Consider the following 84-residue polypeptide: U4-theraphotoxin-Hhn1a (84 aa).

Residues 1–22 (MKVTLIAILTCAAVLVLHTTAA) form the signal peptide. The propeptide occupies 23–47 (EELEESQLMEVGMPDTELAAVDEER). 3 disulfides stabilise this stretch: Cys-51–Cys-65, Cys-55–Cys-76, and Cys-70–Cys-81.

It belongs to the neurotoxin 12 (Hwtx-2) family. 02 (Hwtx-2) subfamily. Expressed by the venom gland.

It is found in the secreted. In terms of biological role, postsynaptic neurotoxin. In Cyriopagopus hainanus (Chinese bird spider), this protein is U4-theraphotoxin-Hhn1a.